The sequence spans 994 residues: Integrator complex subunit 5 (994 aa).

Residues 559 to 586 (NSNNNNELCNGKDYGKRTKLEPGEDKVD) form a disordered region. Residues 571–583 (DYGKRTKLEPGED) are compositionally biased toward basic and acidic residues. Transmembrane regions (helical) follow at residues 769-786 (YSLVSLLLVELVSTDVMY) and 810-826 (AFINSPVLWAVLGLIAG).

Belongs to the Integrator subunit 5 family. As to quaternary structure, belongs to the multiprotein complex Integrator, at least composed of IntS1, IntS2, IntS3, IntS4, omd/IntS5, IntS6, defl/IntS7, IntS8, IntS9, IntS10, IntS11, IntS12, asun/IntS13, IntS14 and IntS15. The core complex associates with protein phosphatase 2A subunits mts/PP2A and Pp2A-29B, to form the Integrator-PP2A (INTAC) complex.

It is found in the nucleus membrane. The protein localises to the nucleus. Its subcellular location is the cytoplasm. Its function is as follows. Component of the integrator complex, a multiprotein complex that terminates RNA polymerase II (Pol II) transcription in the promoter-proximal region of genes. The integrator complex provides a quality checkpoint during transcription elongation by driving premature transcription termination of transcripts that are unfavorably configured for transcriptional elongation: the complex terminates transcription by (1) catalyzing dephosphorylation of the C-terminal domain (CTD) of Pol II subunit Polr2A/Rbp1 and Spt5, and (2) degrading the exiting nascent RNA transcript via endonuclease activity. The integrator complex is also involved in the 3'-end processing of the U7 snRNA, and also the spliceosomal snRNAs U1, U2, U4 and U5. The chain is Integrator complex subunit 5 from Drosophila melanogaster (Fruit fly).